The primary structure comprises 371 residues: Cuticle collagen 71 (371 aa).

Residues 38 to 60 form a helical membrane-spanning segment; it reads GYAAVTFSTVSVICFCVTMPVVF. 2 disordered regions span residues 108–127 and 153–371; these read AGYD…GGDA and EGPH…GTRR. Over residues 174–186 the composition is skewed to pro residues; the sequence is PGPPGPPGPPGRP. The segment covering 188 to 201 has biased composition (low complexity); it reads PNGKAGANGLNGNP. Residues 202–222 are compositionally biased toward pro residues; that stretch reads GRPPEAPCEPVTPPPCPPCPA. The span at 223–240 shows a compositional bias: low complexity; that stretch reads GPKGAPGQAGYPGADGQP. The 58-residue stretch at 223 to 280 folds into the Collagen-like domain; it reads GPKGAPGQAGYPGADGQPGSQGDNGEKGSDGAAGEKGRPGPLGKIGEPGATGETGENA. Residues 246-260 show a composition bias toward basic and acidic residues; the sequence is NGEKGSDGAAGEKGR. Low complexity predominate over residues 314–323; sequence AGAPGAPGEN. A compositionally biased stretch (basic and acidic residues) spans 340 to 349; sequence HDGKAGRAGE.

It belongs to the cuticular collagen family. In terms of assembly, collagen polypeptide chains are complexed within the cuticle by disulfide bonds and other types of covalent cross-links.

The protein localises to the membrane. It localises to the nucleus. Probable cuticular collagen-like protein. Nematode cuticles are composed largely of collagen-like proteins. The cuticle functions both as an exoskeleton and as a barrier to protect the worm from its environment. Acts downstream of the Wnt signaling pathway, perhaps in the formation of the adult cuticle. This Caenorhabditis elegans protein is Cuticle collagen 71.